The following is a 220-amino-acid chain: Probable acrEF/envCD operon repressor (220 aa).

The HTH tetR-type domain maps to 10–70 (LKTRQELIET…EMWLQQPSLR (61 aa)). Residues 33 to 52 (TLNDIADAANVTRGAIYWHF) constitute a DNA-binding region (H-T-H motif).

Its function is as follows. Potential regulator protein for the acrEF/envCD genes. This chain is Probable acrEF/envCD operon repressor (envR), found in Escherichia coli O157:H7.